The sequence spans 1516 residues: MKRNGTRLNFAKANSTKSGSTRARDLMNKMSIIPEWHSLYSNTRKLPCSRPHSSPCKMQRTIFQDLCRPSSSTTAIANPVLSYLDIERILAQKISSRRDDIKKVFQILDRNHNQMVTKGDLKRVITAFLIPLTKDQFQDLLAQIPISSLGNVPYLEFLSRFGGGIDININGIKRVNENEVDNRRTVKEVQLTEKIFRNMRSIRKVFQVMDVNNTGLVQPQELRRVLETFCLRMQDGDYEKFLEQYNIDKTTAVDYNAFLKNLSVKNDASFKYLLSNAAELSRETQQGKNGKRLLDTGSSEDVWKNYSLDDLEKTFCQEFSKSYEKIEKALSAGDPSKGGYISLNYLKVVLDTFIYRLPRRIFIQLIRRFGLKTSTKINWKQFLTAIYERQKLEVSKTLPLKKRSSTEARNRSRKENIIKKLFKYSEDRYTALKKTLLIISSTPSGHITWEELRHILNCMVAKLNDSEFSELKQTFDPEGTGAVRVNSLLDVLDDSTKVRKMSPSTDTKTPLPVAWDSVEELVLDSITRNLQAFYSMLQSYDLRDTGTIGKNNFRKVMRVFCPYLSNEHLVRFSSKFQEAGSGRILYKKFLLSIGVGIPPPTPPLSSPKVQLSDQFQIEEPGQQDERTQPSGEKTSEINNMTKEEVIDGLKHRIQQKDPVFRKQFLSISKEPDVKINQEEFRKVLERSGMPMNDCQYAMLASKLGFKNEEGMSYQDFTMGFEDCMLSGLETVPLQSRTASRTNMDEHFISAEECLRIFPKKLKESFRDVYSAFFRIDLDRDGIISMHDFHRLLQYLQLNMVDLEFERFLSLLGLRLSVTLNFREFQNLCEKRPWKSDEAPQRLIRCKQKVADSELACEQAHQYLIMKAKTRWADLSKNFIETDNEGNGILRRRDIKNSLYGFDIPLTPREFEKLWQNYDTEGRGYITYQEFLHRLGIRYSPKVHRPYKEDYFNFLGHFTKPKQVQEEIQELQQISEREKLMNHYEEISKAFNAMEKSKPVALCRVQKVLQECGCPLKEEELISLLKSLDVSVHNNHIDPVEFLRALEISWASKARPKEKEESSPPPISFSKVTPDEVIKTMQEVVESSQPALVEAFSALDKEDTGFVKAMEFGDVLRSVCQKLTDNQYHYFLRRLRLHLTPNIHWKYFLENFSTFQDETADDWAENMPKAPPPMSPKETAHRDIVARVQKAVASHYHTIVQEFENFDTLKSNTVSRDEFRSICTRHIQILTDEQFDRLWSELPVNAKGRLKYQDFLSKLSIERVPSPPMAAGDSGESTMAQRGSSAPEFSQGTRSNLYSPPRDSRVGLKSRSHPCTPVGTPPLQNCEPIESRLRKQIQGCWRELLRECKEKDTDKQGTISAAEFLALVEKFKLDISREESQQLIVKYDLKNNGKFAYCDFIQSCVLLLKAKETSLMRRMRIQNADKMKEAGMETPSFYSALLRIQPKIVHCWRPMRRSFKTYDKNGTGLLSVADFRKVLRQYSINLSEEEFFHVLEYYDKSLSSKISYNDFLRAFLQ.

The disordered stretch occupies residues 1–23 (MKRNGTRLNFAKANSTKSGSTRA). The span at 12-21 (KANSTKSGST) shows a compositional bias: polar residues. EF-hand domains lie at 96–131 (SRRD…FLIP), 197–232 (RNMR…FCLR), 321–356 (KSYE…FIYR), 444–462 (SGHI…MVAK), and 528–563 (RNLQ…FCPY). 9 residues coordinate Ca(2+): Asp109, Asn111, Asn113, Met115, Asp120, Asp210, Asn212, Thr214, and Glu221. The tract at residues 618–638 (EEPGQQDERTQPSGEKTSEIN) is disordered. Positions 628–638 (QPSGEKTSEIN) are enriched in polar residues. 6 consecutive EF-hand domains span residues 674–690 (KINQ…SGMP), 763–798 (ESFR…LQLN), 905–940 (LTPR…RYSP), 1086–1121 (SSQP…VCQK), 1193–1228 (SHYH…HIQI), and 1229–1264 (LTDE…ERVP). Ca(2+) is bound by residues Asp776, Asp778, Asp780, and Asp787. Thr906 carries the post-translational modification Phosphothreonine. Residues 1263–1318 (VPSPPMAAGDSGESTMAQRGSSAPEFSQGTRSNLYSPPRDSRVGLKSRSHPCTPVG) form a disordered region. Ser1265 carries the post-translational modification Phosphoserine. Residues 1274–1297 (GESTMAQRGSSAPEFSQGTRSNLY) show a composition bias toward polar residues. Ser1311 carries the post-translational modification Phosphoserine. Phosphothreonine is present on residues Thr1315 and Thr1319. The segment at 1318–1516 (GTPPLQNCEP…YNDFLRAFLQ (199 aa)) is interaction with PARK7. 4 EF-hand domains span residues 1348–1373 (KEKD…FKLD), 1374–1409 (ISRE…LLKA), 1454–1484 (MRRS…YSIN), and 1485–1516 (LSEE…AFLQ). The interaction with AR stretch occupies residues 1422–1516 (NADKMKEAGM…YNDFLRAFLQ (95 aa)). Ca(2+) is bound by residues Asp1462, Asn1464, Thr1466, and Asp1473.

Microtubule inner protein component of sperm flagellar doublet microtubules. Binds PARK7. Part of a ternary complex containing PARK7, EFCAB6/DJBP and AR.

It is found in the nucleus. It localises to the cytoplasm. The protein resides in the cytoskeleton. The protein localises to the flagellum axoneme. Negatively regulates the androgen receptor by recruiting histone deacetylase complex, and protein DJ-1 antagonizes this inhibition by abrogation of this complex. Microtubule inner protein (MIP) part of the dynein-decorated doublet microtubules (DMTs) in cilia axoneme, which is required for motile cilia beating. The sequence is that of EF-hand calcium-binding domain-containing protein 6 (Efcab6) from Mus musculus (Mouse).